Reading from the N-terminus, the 84-residue chain is ATP synthase subunit c (84 aa).

The next 2 helical transmembrane spans lie at 9-29 (IIAS…GFAI) and 54-74 (IVAG…LLFI).

The protein belongs to the ATPase C chain family. In terms of assembly, F-type ATPases have 2 components, F(1) - the catalytic core - and F(0) - the membrane proton channel. F(1) has five subunits: alpha(3), beta(3), gamma(1), delta(1), epsilon(1). F(0) has three main subunits: a(1), b(2) and c(10-14). The alpha and beta chains form an alternating ring which encloses part of the gamma chain. F(1) is attached to F(0) by a central stalk formed by the gamma and epsilon chains, while a peripheral stalk is formed by the delta and b chains.

The protein localises to the cell inner membrane. In terms of biological role, f(1)F(0) ATP synthase produces ATP from ADP in the presence of a proton or sodium gradient. F-type ATPases consist of two structural domains, F(1) containing the extramembraneous catalytic core and F(0) containing the membrane proton channel, linked together by a central stalk and a peripheral stalk. During catalysis, ATP synthesis in the catalytic domain of F(1) is coupled via a rotary mechanism of the central stalk subunits to proton translocation. Key component of the F(0) channel; it plays a direct role in translocation across the membrane. A homomeric c-ring of between 10-14 subunits forms the central stalk rotor element with the F(1) delta and epsilon subunits. This Pasteurella multocida (strain Pm70) protein is ATP synthase subunit c.